The chain runs to 390 residues: GDSL esterase/lipase At1g28580 (390 aa).

An N-terminal signal peptide occupies residues 1-28 (MAYPGSPILMKLLVFIFLSTFVVTNVSS). Catalysis depends on Ser44, which acts as the Nucleophile. Asn140 and Asn322 each carry an N-linked (GlcNAc...) asparagine glycan. Active-site residues include Asp347 and His350.

Belongs to the 'GDSL' lipolytic enzyme family.

The protein resides in the secreted. The polypeptide is GDSL esterase/lipase At1g28580 (Arabidopsis thaliana (Mouse-ear cress)).